A 201-amino-acid polypeptide reads, in one-letter code: Small ribosomal subunit protein uS4c (201 aa).

Residues 15–44 form a disordered region; it reads LGALPGLTNKRPRAGSDLRNQSRSGKKSQY. One can recognise an S4 RNA-binding domain in the interval 89 to 149; it reads MRLDNILFRL…DEQKSRALIQ (61 aa).

It belongs to the universal ribosomal protein uS4 family. Part of the 30S ribosomal subunit. Contacts protein S5. The interaction surface between S4 and S5 is involved in control of translational fidelity.

It is found in the plastid. Its subcellular location is the chloroplast. Functionally, one of the primary rRNA binding proteins, it binds directly to 16S rRNA where it nucleates assembly of the body of the 30S subunit. In terms of biological role, with S5 and S12 plays an important role in translational accuracy. The sequence is that of Small ribosomal subunit protein uS4c (rps4) from Helianthus annuus (Common sunflower).